A 127-amino-acid polypeptide reads, in one-letter code: Biogenesis of lysosome-related organelles complex 1 subunit 2 (127 aa).

It belongs to the BLOC1S2 family. Component of the biogenesis of lysosome-related organelles complex-1 (BLOC-1). Interacts with BLOS1 and SNX1.

It localises to the cytoplasm. The protein localises to the endosome. Its function is as follows. Component of the biogenesis of lysosome-related organelles complex-1 (BLOC-1), a complex that mediates the vacuolar degradative transport via the intracellular vesicle trafficking from the endosome to the vacuole. The sequence is that of Biogenesis of lysosome-related organelles complex 1 subunit 2 (BLOS2) from Arabidopsis thaliana (Mouse-ear cress).